A 326-amino-acid chain; its full sequence is Aspartate carbamoyltransferase catalytic subunit (326 aa).

Residues R60 and T61 each contribute to the carbamoyl phosphate site. K88 lines the L-aspartate pocket. Carbamoyl phosphate is bound by residues R110, H143, and Q146. L-aspartate contacts are provided by R183 and R239. The carbamoyl phosphate site is built by G280 and P281.

It belongs to the aspartate/ornithine carbamoyltransferase superfamily. ATCase family. Heterododecamer (2C3:3R2) of six catalytic PyrB chains organized as two trimers (C3), and six regulatory PyrI chains organized as three dimers (R2).

The enzyme catalyses carbamoyl phosphate + L-aspartate = N-carbamoyl-L-aspartate + phosphate + H(+). The protein operates within pyrimidine metabolism; UMP biosynthesis via de novo pathway; (S)-dihydroorotate from bicarbonate: step 2/3. Its function is as follows. Catalyzes the condensation of carbamoyl phosphate and aspartate to form carbamoyl aspartate and inorganic phosphate, the committed step in the de novo pyrimidine nucleotide biosynthesis pathway. The chain is Aspartate carbamoyltransferase catalytic subunit from Microcystis aeruginosa (strain NIES-843 / IAM M-2473).